Consider the following 515-residue polypeptide: ATP synthase subunit alpha (515 aa).

Position 169–176 (glycine 169–threonine 176) interacts with ATP.

It belongs to the ATPase alpha/beta chains family. As to quaternary structure, F-type ATPases have 2 components, CF(1) - the catalytic core - and CF(0) - the membrane proton channel. CF(1) has five subunits: alpha(3), beta(3), gamma(1), delta(1), epsilon(1). CF(0) has three main subunits: a(1), b(2) and c(9-12). The alpha and beta chains form an alternating ring which encloses part of the gamma chain. CF(1) is attached to CF(0) by a central stalk formed by the gamma and epsilon chains, while a peripheral stalk is formed by the delta and b chains.

It is found in the cell inner membrane. The catalysed reaction is ATP + H2O + 4 H(+)(in) = ADP + phosphate + 5 H(+)(out). Its function is as follows. Produces ATP from ADP in the presence of a proton gradient across the membrane. The alpha chain is a regulatory subunit. In Neisseria meningitidis serogroup C (strain 053442), this protein is ATP synthase subunit alpha.